We begin with the raw amino-acid sequence, 759 residues long: Protein MEI2-like 3 (759 aa).

RRM domains lie at 166 to 239 (RTLF…FSIP) and 251 to 324 (GTLV…HSRP).

Its function is as follows. Probable RNA-binding protein that plays a role in meiosis and vegetative growth. The sequence is that of Protein MEI2-like 3 (ML3) from Arabidopsis thaliana (Mouse-ear cress).